We begin with the raw amino-acid sequence, 43 residues long: Photosystem II reaction center protein K (43 aa).

The propeptide occupies 1–6; it reads MSLLLA. Residues 18 to 38 form a helical membrane-spanning segment; that stretch reads IVDVLPIIPVLFLLLAFVWQA.

Belongs to the PsbK family. As to quaternary structure, PSII is composed of 1 copy each of membrane proteins PsbA, PsbB, PsbC, PsbD, PsbE, PsbF, PsbH, PsbI, PsbJ, PsbK, PsbL, PsbM, PsbT, PsbX, PsbY, PsbZ, Psb30/Ycf12, at least 3 peripheral proteins of the oxygen-evolving complex and a large number of cofactors. It forms dimeric complexes.

The protein localises to the plastid. The protein resides in the chloroplast thylakoid membrane. Functionally, one of the components of the core complex of photosystem II (PSII). PSII is a light-driven water:plastoquinone oxidoreductase that uses light energy to abstract electrons from H(2)O, generating O(2) and a proton gradient subsequently used for ATP formation. It consists of a core antenna complex that captures photons, and an electron transfer chain that converts photonic excitation into a charge separation. This Oltmannsiellopsis viridis (Marine flagellate) protein is Photosystem II reaction center protein K.